A 222-amino-acid chain; its full sequence is uncharacterized protein (222 aa).

Transmembrane regions (helical) follow at residues 22–42 and 189–209; these read IRVI…FLYI and AICL…FCLV.

Its subcellular location is the cell membrane. This is an uncharacterized protein from Escherichia coli (strain K12).